Here is a 488-residue protein sequence, read N- to C-terminus: Phenylalanine--tRNA ligase alpha subunit (488 aa).

L-phenylalanine contacts are provided by residues Thr-315, 354-356 (QLD), Phe-394, and Phe-419.

This sequence belongs to the class-II aminoacyl-tRNA synthetase family. Phe-tRNA synthetase alpha subunit type 2 subfamily. As to quaternary structure, tetramer of two alpha and two beta subunits. Mg(2+) serves as cofactor.

The protein resides in the cytoplasm. It catalyses the reaction tRNA(Phe) + L-phenylalanine + ATP = L-phenylalanyl-tRNA(Phe) + AMP + diphosphate + H(+). In Pyrobaculum arsenaticum (strain DSM 13514 / JCM 11321 / PZ6), this protein is Phenylalanine--tRNA ligase alpha subunit.